Here is a 330-residue protein sequence, read N- to C-terminus: DNA primase small subunit PriS (330 aa).

Active-site residues include D101 and D103. The Zn(2+) site is built by C116, C119, C128, and D131. The active site involves D235.

The protein belongs to the eukaryotic-type primase small subunit family. As to quaternary structure, heterodimer of a small subunit (PriS) and a large subunit (PriL). Mg(2+) is required as a cofactor. Requires Mn(2+) as cofactor.

Catalytic subunit of DNA primase, an RNA polymerase that catalyzes the synthesis of short RNA molecules used as primers for DNA polymerase during DNA replication. The small subunit contains the primase catalytic core and has DNA synthesis activity on its own. Binding to the large subunit stabilizes and modulates the activity, increasing the rate of DNA synthesis while decreasing the length of the DNA fragments, and conferring RNA synthesis capability. The DNA polymerase activity may enable DNA primase to also catalyze primer extension after primer synthesis. May also play a role in DNA repair. The polypeptide is DNA primase small subunit PriS (Saccharolobus islandicus (strain Y.N.15.51 / Yellowstone #2) (Sulfolobus islandicus)).